The following is a 792-amino-acid chain: Phenylalanine--tRNA ligase beta subunit (792 aa).

One can recognise a tRNA-binding domain in the interval 39 to 154; it reads LYSFASVITA…EATPLGEDLA (116 aa). The 78-residue stretch at 403–480 folds into the B5 domain; sequence RELKEVALRP…ESWNIETQNP (78 aa). Positions 456, 462, 465, and 466 each coordinate Mg(2+). Residues 695–791 enclose the FDX-ACB domain; sequence AIYPSSFRDL…LLTDTKGTIN (97 aa).

Belongs to the phenylalanyl-tRNA synthetase beta subunit family. Type 1 subfamily. Tetramer of two alpha and two beta subunits. The cofactor is Mg(2+).

It localises to the cytoplasm. It catalyses the reaction tRNA(Phe) + L-phenylalanine + ATP = L-phenylalanyl-tRNA(Phe) + AMP + diphosphate + H(+). This Chlamydia pneumoniae (Chlamydophila pneumoniae) protein is Phenylalanine--tRNA ligase beta subunit (pheT).